A 558-amino-acid polypeptide reads, in one-letter code: Energy-dependent translational throttle protein EttA (558 aa).

2 consecutive ABC transporter domains span residues 6–256 (YTMK…AVQG) and 322–552 (VEVD…RVTH). 38 to 45 (GPNGAGKS) provides a ligand contact to ATP. An arm region spans residues 94 to 136 (GDIKIKLDRFNEVAELMATDYTDELMEEMGRLQEELDHADAWD). The segment at 239-320 (GNYSTYLEKK…IPVGPRLGNV (82 aa)) is ptIM. 354–361 (GPNGVGKT) provides a ligand contact to ATP.

Belongs to the ABC transporter superfamily. ABCF family. Translational throttle EttA subfamily. Monomer. Probably contacts ribosomal proteins L1, L5, L33 and S7, the 16S and 23S rRNA and the P-site containing tRNA(fMet).

It is found in the cytoplasm. It catalyses the reaction ATP + H2O = ADP + phosphate + H(+). In terms of biological role, a translation factor that gates the progression of the 70S ribosomal initiation complex (IC, containing tRNA(fMet) in the P-site) into the translation elongation cycle by using a mechanism sensitive to the ATP/ADP ratio. Binds to the 70S ribosome E-site where it modulates the state of the translating ribosome during subunit translocation. ATP hydrolysis probably frees it from the ribosome, which can enter the elongation phase. The chain is Energy-dependent translational throttle protein EttA from Mycobacterium tuberculosis (strain CDC 1551 / Oshkosh).